A 720-amino-acid chain; its full sequence is MNFLNKSLIRDSVVLQNRWKIIMKVSLNWLKELAKIEIIDAHSLANKLTQAGFEVEDVEMVNIDGHKDYILDVTSTANRSDVLSMIGLSREVSALTQADIVKTADIPSAGLFDNISTIISDDSLLNCSYYVSAIMDNIVIQDSPKWLKNRLYSCGFISQNLIIDISNYIMLKWGQPINIIDLKKIADTNTESYIEITSNFCSSKQKSVKLDNKDIALSRDVLITQINNNITSIAGIGINQEFHVDQNTKLIFIEAAIFKEAVVRKSSRSIGIRTESSIRQERGLNIDNGRSAYRETLSLLIELTHGKVKATFLKKETENSTLNIDISLKKIQDVLGPIKDNHTVRFLSFDEIENTLKSLQFKITKKDVKKFNVIIPSYRKYDVFREIDIVEEIARVYGYNQFQSKIPKIQFTKHPSSRRNFIDQIRNILRNLGLTELVHYSLVKSKGEINLKNPLIKDYSTLRSSLLEGLINASAYNIKQSNQTVDGFEIGTVFNLKRNKIIETTKLAIILGGSLDIRSEWSEPAHSLNWYEAKGIIENFFRKLNKSIQWVKRESSNDQINFIQNNKSATLTYNNDNIGLFGELNELTSSQFGFNTELFVLEIDLDILQYSDPEINYLSYRIQPYSKYPCITRDLCIVIPKKMQINSLFQLLNQFNDNDLENMTLFDQYSNKLLGNGKKSIGLRFTYRSDHKTLTNLEIDNKQNELQKNIIKKLNLEIRK.

Positions 319–404 constitute a B5 domain; the sequence is NSTLNIDISL…RVYGYNQFQS (86 aa). The Mg(2+) site is built by aspartate 382, aspartate 388, glutamate 391, and glutamate 392. The FDX-ACB domain maps to 626–719; it reads SKYPCITRDL…IIKKLNLEIR (94 aa).

It belongs to the phenylalanyl-tRNA synthetase beta subunit family. Type 1 subfamily. Tetramer of two alpha and two beta subunits. Mg(2+) is required as a cofactor.

It localises to the plastid. It is found in the chloroplast. The enzyme catalyses tRNA(Phe) + L-phenylalanine + ATP = L-phenylalanyl-tRNA(Phe) + AMP + diphosphate + H(+). This chain is Phenylalanine--tRNA ligase beta subunit, chloroplastic (pheT), found in Porphyra purpurea (Red seaweed).